We begin with the raw amino-acid sequence, 302 residues long: Aspartate carbamoyltransferase catalytic subunit (302 aa).

Carbamoyl phosphate-binding residues include R53 and T54. Position 82 (K82) interacts with L-aspartate. The carbamoyl phosphate site is built by R103, H131, and Q134. L-aspartate is bound by residues R164 and R223. Residues L260 and P261 each coordinate carbamoyl phosphate.

This sequence belongs to the aspartate/ornithine carbamoyltransferase superfamily. ATCase family. As to quaternary structure, heterooligomer of catalytic and regulatory chains.

The catalysed reaction is carbamoyl phosphate + L-aspartate = N-carbamoyl-L-aspartate + phosphate + H(+). It participates in pyrimidine metabolism; UMP biosynthesis via de novo pathway; (S)-dihydroorotate from bicarbonate: step 2/3. Its function is as follows. Catalyzes the condensation of carbamoyl phosphate and aspartate to form carbamoyl aspartate and inorganic phosphate, the committed step in the de novo pyrimidine nucleotide biosynthesis pathway. This Methanococcus maripaludis (strain DSM 14266 / JCM 13030 / NBRC 101832 / S2 / LL) protein is Aspartate carbamoyltransferase catalytic subunit.